We begin with the raw amino-acid sequence, 190 residues long: dCTP deaminase, dUMP-forming (190 aa).

Residues 101-106 (KSSLGR), D119, 127-129 (TLE), Q148, Y162, and Q174 each bind dCTP. Residue E129 is the Proton donor/acceptor of the active site. Positions 161–190 (PYGSSGVGSKYQGQRGPTPSRSYQNFIRST) are disordered. Positions 171–190 (YQGQRGPTPSRSYQNFIRST) are enriched in polar residues.

This sequence belongs to the dCTP deaminase family. As to quaternary structure, homotrimer.

The enzyme catalyses dCTP + 2 H2O = dUMP + NH4(+) + diphosphate. It functions in the pathway pyrimidine metabolism; dUMP biosynthesis; dUMP from dCTP: step 1/1. Bifunctional enzyme that catalyzes both the deamination of dCTP to dUTP and the hydrolysis of dUTP to dUMP without releasing the toxic dUTP intermediate. The sequence is that of dCTP deaminase, dUMP-forming from Mycobacterium ulcerans (strain Agy99).